The chain runs to 703 residues: Neoverrucotoxin subunit alpha (703 aa).

Ser-2 is modified (N-acetylserine). Positions 508-703 (PRMPFVQGYK…RFDHGTVRLL (196 aa)) constitute a B30.2/SPRY domain.

The protein belongs to the SNTX/VTX toxin family. Heterodimer of alpha and beta subunits. Not glycosylated. Post-translationally, four intrachain disulfide linkages are present in the heterodimer. No interchain disulfide bound links the two subunits. In terms of tissue distribution, expressed by the venom gland.

Its subcellular location is the secreted. Has hemolytic and lethal activities. Its hemolytic activity is inhibited by anionic lipids, especially potently by cardiolipin. The sequence is that of Neoverrucotoxin subunit alpha from Synanceia verrucosa (Reef stonefish).